The sequence spans 1480 residues: Nonribosomal peptide synthetase inpA (1480 aa).

Positions 1-17 are enriched in low complexity; sequence MSHSMSSSSSSSSSSSS. A disordered region spans residues 1 to 24; the sequence is MSHSMSSSSSSSSSSSSSRDEGQS. Residues 44–458 are condensation; that stretch reads VQDVYPCTPL…QLISPQDLDQ (415 aa). The tract at residues 479-871 is adenylation; that stretch reads QRHIDTRPDA…GRKDSQVKIR (393 aa). In terms of domain architecture, Carrier spans 1003–1082; it reads DSTNKVALRL…GLAAMITSPH (80 aa). Ser1041 bears the O-(pantetheine 4'-phosphoryl)serine mark. The segment at 1117–1436 is thioesterase (TE) domain; sequence KVFLTGATGL…VLAMLQDPQM (320 aa).

This sequence belongs to the NRP synthetase family.

Its pathway is secondary metabolite biosynthesis. Nonribosomal peptide synthetase; part of the inp gene cluster that mediates the biosynthesis of fellutamide B, a mycotoxin that acts as a proteasome inhibitor. In the first step of fellutabmide B biosynthesis, inpC activates 3-hydroxydodecanoic acid to generate 3-hydroxydodecanoyl-AMP that is then loaded onto the T0 domain of inpB. The 3-hydroxydodecanoyl-S-phosphopantetheinyl-T0 is sequentially extended with L-Asn and L-Gln by the two CAT modules of inpB. The linear lipodipeptide from inpB is then transferred onto inpA for the addition of the third amino acid, L-Leu. Reductive releasing of the lipotripeptide by the TE domain of inpA produces (2S)-fellutamide B. InpF might be involved in the release and transfer of the lipodipeptide from inpB to inpA. The inp cluster-encoded proteasome subunit inpE confers resistance to internally produced fellutamides. The MFS efflux transporter inpD may contribute to fellutamide resistance as well. This chain is Nonribosomal peptide synthetase inpA, found in Emericella nidulans (strain FGSC A4 / ATCC 38163 / CBS 112.46 / NRRL 194 / M139) (Aspergillus nidulans).